The sequence spans 152 residues: Probable histone H2A.3 (152 aa).

Disordered stretches follow at residues 1 to 25 and 129 to 152; these read MDASTKTTKKGAGGRKGGGPRKKSV and KTERANTGGKEPKTTKAGKSPKKA. Basic residues predominate over residues 7–25; the sequence is TTKKGAGGRKGGGPRKKSV. Residues 129 to 142 are compositionally biased toward basic and acidic residues; sequence KTERANTGGKEPKT. The SPKK motif motif lies at 148-151; sequence SPKK.

This sequence belongs to the histone H2A family. The nucleosome is a histone octamer containing two molecules each of H2A, H2B, H3 and H4 assembled in one H3-H4 heterotetramer and two H2A-H2B heterodimers. The octamer wraps approximately 147 bp of DNA.

It is found in the nucleus. The protein localises to the chromosome. In terms of biological role, core component of nucleosome. Nucleosomes wrap and compact DNA into chromatin, limiting DNA accessibility to the cellular machineries which require DNA as a template. Histones thereby play a central role in transcription regulation, DNA repair, DNA replication and chromosomal stability. DNA accessibility is regulated via a complex set of post-translational modifications of histones, also called histone code, and nucleosome remodeling. This chain is Probable histone H2A.3, found in Medicago truncatula (Barrel medic).